Reading from the N-terminus, the 151-residue chain is UPF0756 membrane protein Hore_21770 (151 aa).

A run of 5 helical transmembrane segments spans residues 7–29, 49–69, 84–104, 110–130, and 131–151; these read LLII…GLLL, IEIG…LSPV, TVAI…LDLL, FILG…GIPV, and GPLM…IIKG.

Belongs to the UPF0756 family.

The protein localises to the cell membrane. The chain is UPF0756 membrane protein Hore_21770 from Halothermothrix orenii (strain H 168 / OCM 544 / DSM 9562).